Consider the following 506-residue polypeptide: Cysteine protease 1 (506 aa).

The tract at residues 1-21 is disordered; sequence MTSSRPSGRDSTGWQETVSNT. Cysteine 226 functions as the Nucleophile in the catalytic mechanism. Catalysis depends on residues aspartate 399 and histidine 401.

Belongs to the peptidase C54 family.

It localises to the cytoplasm. The protein localises to the nucleus. It is found in the preautophagosomal structure. The catalysed reaction is [protein]-C-terminal L-amino acid-glycyl-phosphatidylethanolamide + H2O = [protein]-C-terminal L-amino acid-glycine + a 1,2-diacyl-sn-glycero-3-phosphoethanolamine. In terms of biological role, cysteine protease that plays a key role in cytoplasm to vacuole transport (Cvt) and autophagy by mediating both proteolytic activation and delipidation of ATG8. Required for selective autophagic degradation of the nucleus (nucleophagy) as well as for mitophagy which contributes to regulate mitochondrial quantity and quality by eliminating the mitochondria to a basal level to fulfill cellular energy requirements and preventing excess ROS production. The protease activity is required for proteolytic activation of ATG8: cleaves the C-terminal amino acid of ATG8 to reveal a C-terminal glycine. ATG8 ubiquitin-like activity requires the exposure of the glycine at the C-terminus for its conjugation to phosphatidylethanolamine (PE) and its insertion to membranes, which is necessary for autophagy. The ATG8-PE conjugate mediates tethering between adjacent membranes and stimulates membrane hemifusion, leading to expansion of the autophagosomal membrane during autophagy. In addition to the protease activity, also catalyzes deconjugation of PE-conjugated forms of ATG8 during macroautophagy: ATG8 delipidation is required to release the protein from membranes, which facilitates multiple events during macroautophagy, and especially for efficient autophagosome biogenesis, the assembly of ATG9-containing tubulovesicular clusters into phagophores/autophagosomes, and for the disassembly of PAS-associated ATG components. ATG8 delipidation by ATG4 also recycles ATG8-PE generated on inappropriate membranes to maintain a reservoir of unlipidated ATG8 that is required for autophagosome formation at the PAS. In Neurospora crassa (strain ATCC 24698 / 74-OR23-1A / CBS 708.71 / DSM 1257 / FGSC 987), this protein is Cysteine protease 1 (cpr-1).